Consider the following 277-residue polypeptide: Large ribosomal subunit protein uL2 (277 aa).

2 disordered regions span residues 1–58 (MGIR…GGGH) and 223–277 (GVVM…GKKR). Basic and acidic residues predominate over residues 23–33 (EITRSEPEKSL). Positions 37 to 58 (LHGRGGRNAHGKITTRHKGGGH) are enriched in basic residues. Positions 251–267 (GKPEGRTRRNKPSDKLI) are enriched in basic and acidic residues. Positions 268–277 (VRRRRTGKKR) are enriched in basic residues.

This sequence belongs to the universal ribosomal protein uL2 family. In terms of assembly, part of the 50S ribosomal subunit. Forms a bridge to the 30S subunit in the 70S ribosome.

In terms of biological role, one of the primary rRNA binding proteins. Required for association of the 30S and 50S subunits to form the 70S ribosome, for tRNA binding and peptide bond formation. It has been suggested to have peptidyltransferase activity; this is somewhat controversial. Makes several contacts with the 16S rRNA in the 70S ribosome. The sequence is that of Large ribosomal subunit protein uL2 from Saccharopolyspora erythraea (strain ATCC 11635 / DSM 40517 / JCM 4748 / NBRC 13426 / NCIMB 8594 / NRRL 2338).